Consider the following 238-residue polypeptide: 2-C-methyl-D-erythritol 4-phosphate cytidylyltransferase (238 aa).

Belongs to the IspD/TarI cytidylyltransferase family. IspD subfamily.

The catalysed reaction is 2-C-methyl-D-erythritol 4-phosphate + CTP + H(+) = 4-CDP-2-C-methyl-D-erythritol + diphosphate. It participates in isoprenoid biosynthesis; isopentenyl diphosphate biosynthesis via DXP pathway; isopentenyl diphosphate from 1-deoxy-D-xylulose 5-phosphate: step 2/6. Functionally, catalyzes the formation of 4-diphosphocytidyl-2-C-methyl-D-erythritol from CTP and 2-C-methyl-D-erythritol 4-phosphate (MEP). The sequence is that of 2-C-methyl-D-erythritol 4-phosphate cytidylyltransferase from Salinibacter ruber (strain DSM 13855 / M31).